A 193-amino-acid chain; its full sequence is Holliday junction branch migration complex subunit RuvA (193 aa).

Positions 1-64 (MIGRIQGTLV…EDAQQLFGFA (64 aa)) are domain I. A domain II region spans residues 65–139 (TEIEREAFRQ…GKLAPDLGIT (75 aa)). The tract at residues 139 to 143 (TGGKP) is flexible linker. The segment at 144–193 (QAIEATSEVLQALLSLGYSEKEALLALKQIPPETSVSDGIRMGLKYLSKP) is domain III.

It belongs to the RuvA family. In terms of assembly, homotetramer. Forms an RuvA(8)-RuvB(12)-Holliday junction (HJ) complex. HJ DNA is sandwiched between 2 RuvA tetramers; dsDNA enters through RuvA and exits via RuvB. An RuvB hexamer assembles on each DNA strand where it exits the tetramer. Each RuvB hexamer is contacted by two RuvA subunits (via domain III) on 2 adjacent RuvB subunits; this complex drives branch migration. In the full resolvosome a probable DNA-RuvA(4)-RuvB(12)-RuvC(2) complex forms which resolves the HJ.

Its subcellular location is the cytoplasm. Functionally, the RuvA-RuvB-RuvC complex processes Holliday junction (HJ) DNA during genetic recombination and DNA repair, while the RuvA-RuvB complex plays an important role in the rescue of blocked DNA replication forks via replication fork reversal (RFR). RuvA specifically binds to HJ cruciform DNA, conferring on it an open structure. The RuvB hexamer acts as an ATP-dependent pump, pulling dsDNA into and through the RuvAB complex. HJ branch migration allows RuvC to scan DNA until it finds its consensus sequence, where it cleaves and resolves the cruciform DNA. The chain is Holliday junction branch migration complex subunit RuvA from Polynucleobacter asymbioticus (strain DSM 18221 / CIP 109841 / QLW-P1DMWA-1) (Polynucleobacter necessarius subsp. asymbioticus).